The primary structure comprises 254 residues: Protein PET122, mitochondrial (254 aa).

The N-terminal 8 residues, 1 to 8, are a transit peptide targeting the mitochondrion; it reads MLTITKRL. Positions 185-254 are essential for PET122 function; the sequence is QAAALALFGR…IKRRGFEINT (70 aa).

It localises to the mitochondrion inner membrane. Required for expression of the mitochondrial gene for cytochrome c oxidase subunit 3 (COX3). PET122 seems to work by directly interacting with the small ribosomal subunit to promote translation initiation on the COX3 mRNA. The polypeptide is Protein PET122, mitochondrial (PET122) (Saccharomyces cerevisiae (strain ATCC 204508 / S288c) (Baker's yeast)).